We begin with the raw amino-acid sequence, 81 residues long: Cytotoxin 2 (81 aa).

A signal peptide spans 1-21 (MKTLLLTLVVVTIVCLDLGYT). Disulfide bonds link Cys24/Cys42, Cys35/Cys59, Cys63/Cys74, and Cys75/Cys80.

Belongs to the three-finger toxin family. Short-chain subfamily. Type IA cytotoxin sub-subfamily. In terms of assembly, monomer in solution; Homodimer and oligomer in the presence of negatively charged lipids forming a pore with a size ranging between 20 and 30 Angstroms. In terms of tissue distribution, expressed by the venom gland.

Its subcellular location is the secreted. It localises to the target cell membrane. In terms of biological role, shows cytolytic activity on many different cells by forming pore in lipid membranes. In vivo, increases heart rate or kills the animal by cardiac arrest. In addition, it binds to heparin with high affinity, interacts with Kv channel-interacting protein 1 (KCNIP1) in a calcium-independent manner, and binds to integrin alpha-V/beta-3 (ITGAV/ITGB3) with moderate affinity. This is Cytotoxin 2 from Naja kaouthia (Monocled cobra).